A 96-amino-acid chain; its full sequence is Large ribosomal subunit protein eL21 (96 aa).

Positions M1 to K22 are disordered.

Belongs to the eukaryotic ribosomal protein eL21 family.

This chain is Large ribosomal subunit protein eL21, found in Methanosphaera stadtmanae (strain ATCC 43021 / DSM 3091 / JCM 11832 / MCB-3).